A 60-amino-acid chain; its full sequence is Ferredoxin (60 aa).

2 4Fe-4S ferredoxin-type domains span residues 2–29 (KVRV…LGDD) and 30–60 (GKAK…SVEE). Residues Cys10, Cys13, and Cys16 each contribute to the [4Fe-4S] cluster site. Cys20 and Cys43 are oxidised to a cystine. Residue Cys51 participates in [4Fe-4S] cluster binding.

In terms of assembly, monomer. It depends on [4Fe-4S] cluster as a cofactor.

In terms of biological role, ferredoxins are iron-sulfur proteins that transfer electrons in a wide variety of metabolic reactions. This chain is Ferredoxin (fdx), found in Thermotoga maritima (strain ATCC 43589 / DSM 3109 / JCM 10099 / NBRC 100826 / MSB8).